Consider the following 233-residue polypeptide: Phosphoglycolate phosphatase (233 aa).

D13 (nucleophile) is an active-site residue. Mg(2+) contacts are provided by D13, D15, and D175.

This sequence belongs to the HAD-like hydrolase superfamily. CbbY/CbbZ/Gph/YieH family. The cofactor is Mg(2+).

It carries out the reaction 2-phosphoglycolate + H2O = glycolate + phosphate. It participates in organic acid metabolism; glycolate biosynthesis; glycolate from 2-phosphoglycolate: step 1/1. Specifically catalyzes the dephosphorylation of 2-phosphoglycolate. Is involved in the dissimilation of the intracellular 2-phosphoglycolate formed during the DNA repair of 3'-phosphoglycolate ends, a major class of DNA lesions induced by oxidative stress. This chain is Phosphoglycolate phosphatase, found in Agrobacterium fabrum (strain C58 / ATCC 33970) (Agrobacterium tumefaciens (strain C58)).